The primary structure comprises 101 residues: uncharacterized protein (101 aa).

This is an uncharacterized protein from Haemophilus influenzae (strain ATCC 51907 / DSM 11121 / KW20 / Rd).